Reading from the N-terminus, the 79-residue chain is Short neurotoxin 2 (79 aa).

A signal peptide spans 1–19 (PLLLTLVVVTIVCLDLGYT). 4 disulfides stabilise this stretch: C22–C41, C36–C58, C60–C71, and C72–C77.

It belongs to the three-finger toxin family. Short-chain subfamily. Type I alpha-neurotoxin sub-subfamily. As to expression, expressed by the venom gland.

It is found in the secreted. Binds to muscle nicotinic acetylcholine receptor (nAChR) and inhibit acetylcholine from binding to the receptor, thereby impairing neuromuscular transmission. This Hydrophis cyanocinctus (Asian annulated sea snake) protein is Short neurotoxin 2.